A 969-amino-acid polypeptide reads, in one-letter code: Dual serine/threonine and tyrosine protein kinase (969 aa).

A coiled-coil region spans residues 7–37 (QEFRRYLRNRNQLQHVLEETQQALELINLEN). The Protein kinase domain maps to 632–894 (PHCAEEIGRG…PLLGAIVPVL (263 aa)). Residues 638–646 (IGRGQYGIV) and Lys662 each bind ATP. Asp760 (proton acceptor) is an active-site residue. Residues 904–945 (SKSLQEVSSDKLQESSTDSRNPALALAEPYNQRGTVVSPPPT) form a disordered region.

This sequence belongs to the protein kinase superfamily. Ser/Thr protein kinase family.

It localises to the cytoplasm. It catalyses the reaction L-seryl-[protein] + ATP = O-phospho-L-seryl-[protein] + ADP + H(+). It carries out the reaction L-threonyl-[protein] + ATP = O-phospho-L-threonyl-[protein] + ADP + H(+). The enzyme catalyses L-tyrosyl-[protein] + ATP = O-phospho-L-tyrosyl-[protein] + ADP + H(+). The polypeptide is Dual serine/threonine and tyrosine protein kinase (Apis mellifera (Honeybee)).